We begin with the raw amino-acid sequence, 64 residues long: Large ribosomal subunit protein bL35 (64 aa).

Residues 1 to 28 (MPKMKTKSGAAKRFKKTAGGLKHKHAFK) are compositionally biased toward basic residues. Residues 1-64 (MPKMKTKSGA…ARVERSLRLR (64 aa)) form a disordered region. Residues 53-64 (DVARVERSLRLR) are compositionally biased toward basic and acidic residues.

This sequence belongs to the bacterial ribosomal protein bL35 family.

The sequence is that of Large ribosomal subunit protein bL35 from Pseudomonas aeruginosa (strain LESB58).